The sequence spans 209 residues: MKLVLLERVENLGVIGDVVSVRPGFARNFLLPQGKALRATEANMARFEVERELLEKRNAERAAEAAESGKTIDGESFVMIRQAGESGQLYGSVTSRDIAEIVSESGTKVVRSQIALNAPIKTLGLHELKIKLHADVSVTVTINIARSQDEAERQAAGEDVIAAQADEDRAIADAQAAELFEASEEGQELAAQREATEDAGADESEETEA.

The segment at 181–209 is disordered; sequence EASEEGQELAAQREATEDAGADESEETEA. Positions 197 to 209 are enriched in acidic residues; the sequence is EDAGADESEETEA.

The protein belongs to the bacterial ribosomal protein bL9 family.

Functionally, binds to the 23S rRNA. The chain is Large ribosomal subunit protein bL9 from Maricaulis maris (strain MCS10) (Caulobacter maris).